A 359-amino-acid polypeptide reads, in one-letter code: Serpentine receptor class epsilon-33 (359 aa).

The next 7 helical transmembrane spans lie at 29–49, 65–85, 134–156, 168–188, 194–214, 255–275, and 285–305; these read VIISILELMIYLVCIHLVNVS, ILALPMFGMWYELIIGKFITI, YMYSWIFGVLTVAVERVIASVLI, PAILLIISQFLSISMAFGLLF, LSAHFPWMISCPISVAAYVFV, LVFAVLSFIGICGCGIAALHY, and LIENVLFLNPFLIGLTAMLSI.

It belongs to the nematode receptor-like protein sre family.

It localises to the membrane. The protein is Serpentine receptor class epsilon-33 (sre-33) of Caenorhabditis elegans.